A 239-amino-acid chain; its full sequence is Prolyl hydroxylase EGLN3 (239 aa).

The beta(2)beta(3) 'finger-like' loop stretch occupies residues 62-73; it reads AGPRAGVSKRHL. Residues 88–104 form a required for interaction with ADRB2 region; it reads CEAINFLLSLIDRLVLY. The Fe2OG dioxygenase domain maps to 116-214; the sequence is ERSKAMVACY…RYAMTVWYFD (99 aa). Residues histidine 135, aspartate 137, and histidine 196 each coordinate Fe cation. 2-oxoglutarate is bound at residue arginine 205.

In terms of assembly, interacts with ADRB2; the interaction hydroxylates ADRB2 facilitating its ubiquitination by the VHL-E3 ligase complex. Interacts with PAX2; the interaction targets PAX2 for destruction. Interacts with PKM; the interaction hydroxylates PKM in hypoxia. Interacts with WDR83; the interaction leads to almost complete elimination of HIF-mediated reporter activity. Interacts with BCL2 (via its BH4 domain); the interaction disrupts the BAX-BCL4 complex inhibiting the anti-apoptotic activity of BCL2. It depends on Fe(2+) as a cofactor. The cofactor is L-ascorbate. Ubiquitinated by SIAH1 and/or SIAH2 in response to the unfolded protein response (UPR), leading to its degradation. In terms of tissue distribution, highly expressed in vascular smooth muscle. Moderately expressed in esophagus, stomach, small bowel and aorta. Low levels in tail and kidney. Expression also in pheochromocytoma cell line PC-12.

It localises to the nucleus. It is found in the cytoplasm. The catalysed reaction is L-prolyl-[protein] + 2-oxoglutarate + O2 = trans-4-hydroxy-L-prolyl-[protein] + succinate + CO2. The enzyme catalyses L-prolyl-[hypoxia-inducible factor alpha subunit] + 2-oxoglutarate + O2 = trans-4-hydroxy-L-prolyl-[hypoxia-inducible factor alpha subunit] + succinate + CO2. In terms of biological role, prolyl hydroxylase that mediates hydroxylation of proline residues in target proteins, such as PKM, TELO2, ATF4 and HIF1A. Target proteins are preferentially recognized via a LXXLAP motif. Cellular oxygen sensor that catalyzes, under normoxic conditions, the post-translational formation of 4-hydroxyproline in hypoxia-inducible factor (HIF) alpha proteins. Hydroxylates a specific proline found in each of the oxygen-dependent degradation (ODD) domains (N-terminal, NODD, and C-terminal, CODD) of HIF1A. Also hydroxylates HIF2A. Has a preference for the CODD site for both HIF1A and HIF2A. Hydroxylation on the NODD site by EGLN3 appears to require prior hydroxylation on the CODD site. Hydroxylated HIFs are then targeted for proteasomal degradation via the von Hippel-Lindau ubiquitination complex. Under hypoxic conditions, the hydroxylation reaction is attenuated allowing HIFs to escape degradation resulting in their translocation to the nucleus, heterodimerization with HIF1B, and increased expression of hypoxy-inducible genes. ELGN3 is the most important isozyme in limiting physiological activation of HIFs (particularly HIF2A) in hypoxia. Also hydroxylates PKM in hypoxia, limiting glycolysis. Under normoxia, hydroxylates and regulates the stability of ADRB2. Regulator of cardiomyocyte and neuronal apoptosis. In cardiomyocytes, inhibits the anti-apoptotic effect of BCL2 by disrupting the BAX-BCL2 complex. In neurons, has a NGF-induced proapoptotic effect, probably through regulating CASP3 activity. Also essential for hypoxic regulation of neutrophilic inflammation. Plays a crucial role in DNA damage response (DDR) by hydroxylating TELO2, promoting its interaction with ATR which is required for activation of the ATR/CHK1/p53 pathway. Also mediates hydroxylation of ATF4, leading to decreased protein stability of ATF4. This is Prolyl hydroxylase EGLN3 (Egln3) from Rattus norvegicus (Rat).